A 360-amino-acid chain; its full sequence is Snurportin-1 (360 aa).

Position 1 is an N-acetylmethionine (M1). Residues 1-42 (MEELSQALASSFSVSQDLNSTAAPHPRLSQYKSKYSSLEQSE) are disordered. Residues 1-65 (MEELSQALAS…LDYVNHARRL (65 aa)) are necessary for interaction with KPNB1 and m3G-cap U1 and U5 snRNP import receptor activity. A necessary for interaction with XPO1 region spans residues 1 to 159 (MEELSQALAS…NRFSSLLPGG (159 aa)). Positions 7-22 (ALASSFSVSQDLNSTA) are enriched in polar residues. The IBB domain occupies 11–73 (SFSVSQDLNS…RLAEDDWTGM (63 aa)). S75 carries the post-translational modification Phosphoserine. Residues 127-129 (GKR) form an interaction with m3G-cap structure region. A necessary for binding to the m3G-cap structure region spans residues 208–328 (MHSKLPEEEG…GMKEKLTHKA (121 aa)). The disordered stretch occupies residues 339–360 (LSTPKLKGSSHSPDHPGCLMEN). Residue S350 is modified to Phosphoserine.

The protein belongs to the snurportin family. Component of an import snRNP complex composed of KPNB1, SNUPN, SMN1 and ZNF259. Component of a nuclear export receptor complex composed of KPNB1, Ran, SNUPN and XPO1. Found in a trimeric export complex with SNUPN, Ran and XPO1. Interacts (via IBB domain) with KPNB1; the interaction is direct. Interacts with DDX20, IPO7, SMN1, SNRPB and XPO1. Interacts directly with XPO1. Its interaction with XPO1 and binding to m3G-cap U snRNPs appears to be mutually exclusive. Can form homomers.

It is found in the nucleus. The protein resides in the cytoplasm. In terms of biological role, functions as an U snRNP-specific nuclear import adapter. Involved in the trimethylguanosine (m3G)-cap-dependent nuclear import of U snRNPs. Binds specifically to the terminal m3G-cap U snRNAs. This Homo sapiens (Human) protein is Snurportin-1 (SNUPN).